The chain runs to 212 residues: ATP synthase F(0) complex subunit a (212 aa).

Helical transmembrane passes span 3-23 (MMGI…MFTS), 58-78 (WAAM…LGLL), 87-107 (QLSM…LTGL), 128-148 (IPLL…ALGV), 154-174 (LTAG…LMPT), and 179-199 (ALST…VAMI).

This sequence belongs to the ATPase A chain family. Component of the ATP synthase complex composed at least of ATP5F1A/subunit alpha, ATP5F1B/subunit beta, ATP5MC1/subunit c (homooctomer), MT-ATP6/subunit a, MT-ATP8/subunit 8, ATP5ME/subunit e, ATP5MF/subunit f, ATP5MG/subunit g, ATP5MK/subunit k, ATP5MJ/subunit j, ATP5F1C/subunit gamma, ATP5F1D/subunit delta, ATP5F1E/subunit epsilon, ATP5PF/subunit F6, ATP5PB/subunit b, ATP5PD/subunit d, ATP5PO/subunit OSCP. ATP synthase complex consists of a soluble F(1) head domain (subunits alpha(3) and beta(3)) - the catalytic core - and a membrane F(0) domain - the membrane proton channel (subunits c, a, 8, e, f, g, k and j). These two domains are linked by a central stalk (subunits gamma, delta, and epsilon) rotating inside the F1 region and a stationary peripheral stalk (subunits F6, b, d, and OSCP). Interacts with DNAJC30; interaction is direct.

It localises to the mitochondrion inner membrane. The enzyme catalyses H(+)(in) = H(+)(out). Subunit a, of the mitochondrial membrane ATP synthase complex (F(1)F(0) ATP synthase or Complex V) that produces ATP from ADP in the presence of a proton gradient across the membrane which is generated by electron transport complexes of the respiratory chain. ATP synthase complex consist of a soluble F(1) head domain - the catalytic core - and a membrane F(1) domain - the membrane proton channel. These two domains are linked by a central stalk rotating inside the F(1) region and a stationary peripheral stalk. During catalysis, ATP synthesis in the catalytic domain of F(1) is coupled via a rotary mechanism of the central stalk subunits to proton translocation. With the subunit c (ATP5MC1), forms the proton-conducting channel in the F(0) domain, that contains two crucial half-channels (inlet and outlet) that facilitate proton movement from the mitochondrial intermembrane space (IMS) into the matrix. Protons are taken up via the inlet half-channel and released through the outlet half-channel, following a Grotthuss mechanism. This Tropidurus montanus (Lizard) protein is ATP synthase F(0) complex subunit a.